A 70-amino-acid chain; its full sequence is Sec-independent protein translocase protein TatA (70 aa).

A helical membrane pass occupies residues 1 to 21 (MFGLGGQELLLILLIILLLFG). The disordered stretch occupies residues 47-70 (EDEFNKAMSDPPEKKEKESPSDKG). Positions 57 to 70 (PPEKKEKESPSDKG) are enriched in basic and acidic residues.

It belongs to the TatA/E family. As to quaternary structure, forms a complex with TatC.

It is found in the cell inner membrane. Functionally, part of the twin-arginine translocation (Tat) system that transports large folded proteins containing a characteristic twin-arginine motif in their signal peptide across membranes. TatA could form the protein-conducting channel of the Tat system. This is Sec-independent protein translocase protein TatA from Prosthecochloris aestuarii (strain DSM 271 / SK 413).